We begin with the raw amino-acid sequence, 146 residues long: Large ribosomal subunit protein uL15 (146 aa).

Residues 1–52 (MKLSNLSPKAGSKKRRRRVGRGIAAGQGASCGFGMRGQKSRSGTGTKAGFEG) are disordered. Positions 11 to 20 (GSKKRRRRVG) are enriched in basic residues. Residues 23-35 (IAAGQGASCGFGM) show a composition bias toward gly residues.

Belongs to the universal ribosomal protein uL15 family. As to quaternary structure, part of the 50S ribosomal subunit.

In terms of biological role, binds to the 23S rRNA. The polypeptide is Large ribosomal subunit protein uL15 (Picosynechococcus sp. (strain ATCC 27264 / PCC 7002 / PR-6) (Agmenellum quadruplicatum)).